Here is a 1282-residue protein sequence, read N- to C-terminus: Trafficking protein particle complex subunit 8 (1282 aa).

The tract at residues 245–287 (TDAIAPGPNGASNQQSPSSPTSSVATISSTMPAVGSVSPNSHP) is disordered. Residues 255–273 (ASNQQSPSSPTSSVATISS) are compositionally biased toward low complexity.

Plays a role in endoplasmic reticulum to Golgi apparatus trafficking at a very early stage. Involved in collagen secretion. The chain is Trafficking protein particle complex subunit 8 from Caenorhabditis elegans.